The sequence spans 191 residues: Elongation factor P (191 aa).

At lysine 34 the chain carries N6-(3,6-diaminohexanoyl)-5-hydroxylysine.

It belongs to the elongation factor P family. In terms of processing, may be beta-lysylated on the epsilon-amino group of Lys-34 by the combined action of EpmA and EpmB, and then hydroxylated on the C5 position of the same residue by EpmC (if this protein is present). Lysylation is critical for the stimulatory effect of EF-P on peptide-bond formation. The lysylation moiety may extend toward the peptidyltransferase center and stabilize the terminal 3-CCA end of the tRNA. Hydroxylation of the C5 position on Lys-34 may allow additional potential stabilizing hydrogen-bond interactions with the P-tRNA.

The protein resides in the cytoplasm. It participates in protein biosynthesis; polypeptide chain elongation. In terms of biological role, involved in peptide bond synthesis. Alleviates ribosome stalling that occurs when 3 or more consecutive Pro residues or the sequence PPG is present in a protein, possibly by augmenting the peptidyl transferase activity of the ribosome. Modification of Lys-34 is required for alleviation. This chain is Elongation factor P, found in Psychrobacter sp. (strain PRwf-1).